Here is a 461-residue protein sequence, read N- to C-terminus: Argininosuccinate lyase (461 aa).

The protein belongs to the lyase 1 family. Argininosuccinate lyase subfamily. Homotetramer.

Its subcellular location is the cytoplasm. The enzyme catalyses 2-(N(omega)-L-arginino)succinate = fumarate + L-arginine. It functions in the pathway amino-acid biosynthesis; L-arginine biosynthesis; L-arginine from L-ornithine and carbamoyl phosphate: step 3/3. The polypeptide is Argininosuccinate lyase (Nostoc punctiforme (strain ATCC 29133 / PCC 73102)).